Consider the following 231-residue polypeptide: Ribose-5-phosphate isomerase A (231 aa).

Residues 28–31 (TGST), 83–86 (DGAD), and 96–99 (KGGG) each bind substrate. The Proton acceptor role is filled by E105. A substrate-binding site is contributed by K123.

Belongs to the ribose 5-phosphate isomerase family. Homodimer.

It catalyses the reaction aldehydo-D-ribose 5-phosphate = D-ribulose 5-phosphate. It participates in carbohydrate degradation; pentose phosphate pathway; D-ribose 5-phosphate from D-ribulose 5-phosphate (non-oxidative stage): step 1/1. Its function is as follows. Catalyzes the reversible conversion of ribose-5-phosphate to ribulose 5-phosphate. The sequence is that of Ribose-5-phosphate isomerase A from Parvibaculum lavamentivorans (strain DS-1 / DSM 13023 / NCIMB 13966).